A 315-amino-acid chain; its full sequence is UDP-3-O-acyl-N-acetylglucosamine deacetylase (315 aa).

Zn(2+) is bound by residues H78, H235, and D239. H262 functions as the Proton donor in the catalytic mechanism.

The protein belongs to the LpxC family. The cofactor is Zn(2+).

It carries out the reaction a UDP-3-O-[(3R)-3-hydroxyacyl]-N-acetyl-alpha-D-glucosamine + H2O = a UDP-3-O-[(3R)-3-hydroxyacyl]-alpha-D-glucosamine + acetate. It functions in the pathway glycolipid biosynthesis; lipid IV(A) biosynthesis; lipid IV(A) from (3R)-3-hydroxytetradecanoyl-[acyl-carrier-protein] and UDP-N-acetyl-alpha-D-glucosamine: step 2/6. In terms of biological role, catalyzes the hydrolysis of UDP-3-O-myristoyl-N-acetylglucosamine to form UDP-3-O-myristoylglucosamine and acetate, the committed step in lipid A biosynthesis. The chain is UDP-3-O-acyl-N-acetylglucosamine deacetylase from Syntrophus aciditrophicus (strain SB).